Consider the following 439-residue polypeptide: MARIFQPKKKTQLNTRHQAVQVERLDHHGAGIAYLKKKPLFIDGALPGEEVVTQLVEEKSKFARGKLIKILKPSEARVEPFCSHYHECGGCDLQHLNYDQQLTHKQQTLRQLMRKFAGSDIELGAPVLGESLGYRRRARVSLFVDKKTRQLHFGFRKKQSKQIAQVTDCPVLAPELNVLLPEIYSTLKAFKKPEQLGHVELVLGDNAPCITLRHLNKLTEKETNTLVELAKRHQASLYLMPETDQLDLVEGEVPFYQEAGVTVPFTPNNFIQVNQAVNQKMVAQAVDWLDPKSDERVLDLFCGLGNFSLPIAKRAKHVVGVEGVAEMVEKAVNNASLNQINNARFYHANLEQDFEGQVWAAEQFDKVLLDPARAGASGIIDQVSVLGARRIVYVSCNPATLARDSQSLLEQGYQLTKLGMLDMFPHTSHLESMALFEKS.

Residues 10–69 form the TRAM domain; the sequence is KTQLNTRHQAVQVERLDHHGAGIAYLKKKPLFIDGALPGEEVVTQLVEEKSKFARGKLIK. Cysteine 82, cysteine 88, cysteine 91, and cysteine 169 together coordinate [4Fe-4S] cluster. 6 residues coordinate S-adenosyl-L-methionine: glutamine 272, phenylalanine 301, asparagine 306, glutamate 322, asparagine 349, and aspartate 370. Cysteine 396 functions as the Nucleophile in the catalytic mechanism.

Belongs to the class I-like SAM-binding methyltransferase superfamily. RNA M5U methyltransferase family. RlmD subfamily.

The enzyme catalyses uridine(1939) in 23S rRNA + S-adenosyl-L-methionine = 5-methyluridine(1939) in 23S rRNA + S-adenosyl-L-homocysteine + H(+). Its function is as follows. Catalyzes the formation of 5-methyl-uridine at position 1939 (m5U1939) in 23S rRNA. The sequence is that of 23S rRNA (uracil(1939)-C(5))-methyltransferase RlmD from Vibrio campbellii (strain ATCC BAA-1116).